We begin with the raw amino-acid sequence, 2325 residues long: Protein sidekick homolog (2325 aa).

The N-terminal stretch at M1 to G26 is a signal peptide. Residues K27 to W2019 are Extracellular-facing. Ig-like C2-type domains lie at P28–S105, P217–T319, and P324–A397. Intrachain disulfides connect C52–C94, C247–C301, and C345–C386. The N-linked (GlcNAc...) asparagine glycan is linked to N407. Ig-like C2-type domains follow at residues P456 to N544 and S547 to Q638. Cystine bridges form between C480-C528 and C568-C622. Residues N632, N655, N807, N868, N932, and N1016 are each glycosylated (N-linked (GlcNAc...) asparagine). Fibronectin type-III domains follow at residues M645–Q751, A756–G853, A858–D957, S961–E1055, R1059–T1154, P1159–S1254, S1259–D1359, P1363–R1457, A1463–S1566, Q1571–S1671, P1673–G1775, P1776–G1872, and P1873–L2004. A disordered region spans residues T1036–R1059. Over residues R1037–F1048 the composition is skewed to basic and acidic residues. N-linked (GlcNAc...) asparagine glycosylation is present at N1107. A disordered region spans residues K1137–Q1161. Positions P1145 to Q1161 are enriched in polar residues. N-linked (GlcNAc...) asparagine glycosylation is present at N1614. Disordered stretches follow at residues G1857–G1884 and P1918–T1947. N1863 carries N-linked (GlcNAc...) asparagine glycosylation. Positions A1935–T1947 are enriched in low complexity. Residues W2020–L2040 traverse the membrane as a helical segment. The Cytoplasmic portion of the chain corresponds to C2041–V2325. 4 disordered regions span residues N2080 to G2113, T2164 to S2187, R2202 to P2226, and I2285 to V2325. Positions P2091–D2100 are enriched in polar residues. The span at G2215–P2226 shows a compositional bias: low complexity. Composition is skewed to polar residues over residues A2294–E2305 and A2313–V2325.

It belongs to the sidekick family.

The protein localises to the membrane. Cell adhesion protein. This chain is Protein sidekick homolog (rig-4), found in Caenorhabditis elegans.